Consider the following 873-residue polypeptide: Alanine--tRNA ligase (873 aa).

Zn(2+) contacts are provided by H563, H567, C665, and H669.

Belongs to the class-II aminoacyl-tRNA synthetase family. Zn(2+) serves as cofactor.

It localises to the cytoplasm. It catalyses the reaction tRNA(Ala) + L-alanine + ATP = L-alanyl-tRNA(Ala) + AMP + diphosphate. In terms of biological role, catalyzes the attachment of alanine to tRNA(Ala) in a two-step reaction: alanine is first activated by ATP to form Ala-AMP and then transferred to the acceptor end of tRNA(Ala). Also edits incorrectly charged Ser-tRNA(Ala) and Gly-tRNA(Ala) via its editing domain. This is Alanine--tRNA ligase from Parabacteroides distasonis (strain ATCC 8503 / DSM 20701 / CIP 104284 / JCM 5825 / NCTC 11152).